The following is a 364-amino-acid chain: Chorismate synthase (364 aa).

Positions 48 and 54 each coordinate NADP(+). Residues 130–132, 242–243, G287, 302–306, and R328 contribute to the FMN site; these read RSS, NA, and KPTSS.

This sequence belongs to the chorismate synthase family. In terms of assembly, homotetramer. It depends on FMNH2 as a cofactor.

The enzyme catalyses 5-O-(1-carboxyvinyl)-3-phosphoshikimate = chorismate + phosphate. It participates in metabolic intermediate biosynthesis; chorismate biosynthesis; chorismate from D-erythrose 4-phosphate and phosphoenolpyruvate: step 7/7. In terms of biological role, catalyzes the anti-1,4-elimination of the C-3 phosphate and the C-6 proR hydrogen from 5-enolpyruvylshikimate-3-phosphate (EPSP) to yield chorismate, which is the branch point compound that serves as the starting substrate for the three terminal pathways of aromatic amino acid biosynthesis. This reaction introduces a second double bond into the aromatic ring system. This Allorhizobium ampelinum (strain ATCC BAA-846 / DSM 112012 / S4) (Agrobacterium vitis (strain S4)) protein is Chorismate synthase.